We begin with the raw amino-acid sequence, 508 residues long: Cytochrome P450 monooxygenase lepD (508 aa).

Residues Ile22 to Phe42 traverse the membrane as a helical segment. N-linked (GlcNAc...) asparagine glycans are attached at residues Asn53 and Asn416. Residue Cys454 coordinates heme.

It belongs to the cytochrome P450 family. Heme is required as a cofactor.

The protein resides in the membrane. Its function is as follows. Cytochrome P450 monooxygenase; part of the gene cluster 23 that mediates the biosynthesis of a family of 2-pyridones known as leporins. The hybrid PKS-NRPS synthetase lepA and the enoyl reductase lepG are responsible for fusion of phenylalanine with a hexaketide and subsequent release of the stable tetramic acid precursor, pre-leporin C. Because lepA lacks a designated enoylreductase (ER) domain, the required activity is provided the enoyl reductase lepG. It is possible that the dehydrogenase lepF also participates in production of pre-leporin C. Cytochrome P450 monooxygenase lepH is then required for the ring expansion step to yield leporin C. Leporin C is then presumably further oxidized by the N-hydroxylase lepD to form leporin B. LepI may possess a function in biosynthesis upstream of lepA. Leporin B is further oxidized in the presence of ferric ion to give the leporin B trimer-iron chelate, but whether or not this reaction is catalyzed by an enzyme in the pathway or by ferric ion is not determined yet. This Aspergillus flavus (strain ATCC 200026 / FGSC A1120 / IAM 13836 / NRRL 3357 / JCM 12722 / SRRC 167) protein is Cytochrome P450 monooxygenase lepD.